We begin with the raw amino-acid sequence, 200 residues long: Holliday junction resolvase RecU (200 aa).

Residues 1 to 25 (MTIRYPNGKRYNQASQPHKTPIKKH) are disordered. The Mg(2+) site is built by Thr85, Asp87, Glu100, and Gln119.

This sequence belongs to the RecU family. Requires Mg(2+) as cofactor.

Its subcellular location is the cytoplasm. The enzyme catalyses Endonucleolytic cleavage at a junction such as a reciprocal single-stranded crossover between two homologous DNA duplexes (Holliday junction).. Endonuclease that resolves Holliday junction intermediates in genetic recombination. Cleaves mobile four-strand junctions by introducing symmetrical nicks in paired strands. Promotes annealing of linear ssDNA with homologous dsDNA. Required for DNA repair, homologous recombination and chromosome segregation. The chain is Holliday junction resolvase RecU from Bacillus cereus (strain ZK / E33L).